The chain runs to 314 residues: Thioredoxin reductase aclD (314 aa).

FAD is bound by residues 13-16, 35-40, H47, and A112; these read GGPA and DSKSYR. A disulfide bridge links C136 with C139. FAD is bound by residues D281 and 288–289; that span reads AA.

Belongs to the class-II pyridine nucleotide-disulfide oxidoreductase family. In terms of assembly, homodimer. FAD serves as cofactor.

It participates in mycotoxin biosynthesis. Functionally, thioredoxin reductase; part of the gene cluster that mediates the biosynthesis of aspirochlorine (or antibiotic A30641), an unusual halogenated spiro compound with distinctive antifungal properties due to selective inhibition of protein biosynthesis, and which is also active against bacteria, viruses, and murine tumor cells. The non-ribosomal peptide synthetase (NRPS) aclP is responsible the formation of the diketopiperazine (DKP) core from the condensation of 2 phenylalanine residues. One Phe residue is tailored into chlorotyrosine by hydroxylation and chlorination, whereas the second Phe undergoes an unprecedented C-C bond cleavage to be converted into glycine. After formation of the DKP, sulfur is incorporated into the DKP by conjugation with glutathione by aclG, followed by its stepwise degradation to the thiol by aclI, aclJ and aclK, and the dithiol oxidation by aclT. In addition, oxygenases (aclB, aclC, aclL and aclO) and O-methyltransferases (aclM and aclU) act as tailoring enzymes to produce the intermediate dechloroaspirochlorine. Ultimately, chlorination of dechloroaspirochlorine by the halogenase aclH is the last step in the aspirochlorine pathway. In Aspergillus oryzae (strain ATCC 42149 / RIB 40) (Yellow koji mold), this protein is Thioredoxin reductase aclD.